Consider the following 203-residue polypeptide: Short chain dehydrogenase/reductase dpmpH (203 aa).

D23, Y77, and K81 together coordinate NADP(+). Y77 functions as the Proton acceptor in the catalytic mechanism. K81 serves as the catalytic Lowers pKa of active site Tyr.

Belongs to the short-chain dehydrogenases/reductases (SDR) family.

The protein operates within secondary metabolite biosynthesis; terpenoid biosynthesis. Its function is as follows. Short chain dehydrogenase/reductase; part of the gene cluster that mediates the biosynthesis of diterpenoid pyrones. The first step of the pathway is the synthesis of the alpha-pyrone moiety by the polyketide synthase dpmpA via condensation of one acetyl-CoA starter unit with 3 malonyl-CoA units and 2 methylations. The alpha-pyrone is then combined with geranylgeranyl pyrophosphate (GGPP) formed by the GGPP synthase dpmpD through the action of the prenyltransferase dpmpC to yield a linear alpha-pyrone diterpenoid. Subsequent steps in the diterpenoid pyrone biosynthetic pathway involve the decalin core formation, which is initiated by the epoxidation of the C10-C11 olefin by the FAD-dependent oxidoreductase dpmpE, and is followed by a cyclization cascade catalyzed by the terpene cyclase dpmpB. The short chain dehydrogenase/reductase dpmpG then oxidizes the 8S hydroxy group to a ketone and the short chain dehydrogenase/reductase dpmpH reduces the ketone to the 8R hydroxy group to yield higginsianin B. Higginsianin B is further methylated by the methyltransferase dpmpI to produce the intermediate named FDDP B. The cytochrome P450 monooxygenase dpmpJ then oxidizes the C-26 methyl to primary alcohol, producing the final diterpenoid pyrone with a C-26 primary alcohol on the gamma-pyrone moiety named FDDP C. The chain is Short chain dehydrogenase/reductase dpmpH from Macrophomina phaseolina (strain MS6) (Charcoal rot fungus).